Reading from the N-terminus, the 440-residue chain is Ferreportin (440 aa).

Over 1-8 (MKVQSLLR) the chain is Cytoplasmic. The chain crosses the membrane as a helical span at residues 9–38 (IETQLLLGRLLTRSGDQAWDFVVPFALLVI). Asp24 contacts Ca(2+). The Extracellular portion of the chain corresponds to 39–42 (FPGK). A helical membrane pass occupies residues 43-69 (LQVAAFYYLIVKIGTFLLTPSSGKWID). The Cytoplasmic segment spans residues 70-72 (THP). The chain crosses the membrane as a helical span at residues 73-103 (RIQVVKWGVWLQFFAILAGMVFFGMLDGLVR). Gln84 contacts Ca(2+). The Extracellular segment spans residues 104–109 (AGGRES). Residues 110–145 (WLLSVLFIALALSGVMASLGSQITDISVGNDLAPSL) traverse the membrane as a helical segment. Topologically, residues 146–147 (VA) are cytoplasmic. The chain crosses the membrane as a helical span at residues 148–176 (PEKLTHFNSWLRRIDLATEVGAPILAGAL). The Extracellular segment spans residues 177 to 186 (FAFHPEQLPL). The chain crosses the membrane as a helical span at residues 187–213 (AGLFLIGLWNLVSFVPEYFLLRNVIQR). Ca(2+) is bound by residues Asn196 and Glu203. The Cytoplasmic portion of the chain corresponds to 214–242 (SGLKIKVLTEAQSWKDTFHINLRGSFSDP). A helical membrane pass occupies residues 243 to 271 (IFWLILSYALLWLSVLSPHGVLLAAYLKD). Residues 272–276 (EMRLP) lie on the Extracellular side of the membrane. Residues 277–304 (ETEIGLFRGLGAVFGLISTVSFPYLVRR) form a helical membrane-spanning segment. Residues 305 to 306 (LG) are Cytoplasmic-facing. The chain crosses the membrane as a helical span at residues 307–329 (LISSSRWHLGFQGVTLGIAVTAF). Residues 330-335 (AMGSTA) lie on the Extracellular side of the membrane. The helical transmembrane segment at 336-365 (SVYVFLGCILLSRVGLYGFSNGEFELRQRL) threads the bilayer. The Cytoplasmic portion of the chain corresponds to 366-370 (IPEGR). Residues 371-395 (RGELNSLSSLTTTSATLILFSAGSL) form a helical membrane-spanning segment. Residues 396–398 (LPQ) lie on the Extracellular side of the membrane. The helical transmembrane segment at 399-424 (TEDFKYLVYVSLAAVLLANVVFIKWS) threads the bilayer. The Cytoplasmic portion of the chain corresponds to 425 to 440 (SRQGVVTSGAAEPVES).

This sequence belongs to the ferroportin (FP) (TC 2.A.100) family. Requires Ca(2+) as cofactor.

It is found in the cell membrane. In terms of biological role, iron transpoter that exports Fe(2+) from the cell. Also binds to Co(2+) and Ni(2+). May act as a multivalent divalent metal transporter. The transporter is composed of 12 transmembrane (TM) helices organized into N-terminal (TM1-6) and C-terminal (TM7-12) domains. The substrate-binding site is formed at the interface of the two domains and is alternately accessible from either side of the membrane. The transport cycle is viewed as a series of ligand-induced conformational changes that include open outward and open inward states. The sequence is that of Ferreportin (slc39) from Bdellovibrio bacteriovorus (strain ATCC 15356 / DSM 50701 / NCIMB 9529 / HD100).